Consider the following 193-residue polypeptide: Protein PapJ (193 aa).

The signal sequence occupies residues methionine 1–alanine 27.

It localises to the periplasm. In terms of biological role, this protein maintains pilus integrity and thus is an important participant in pilus assembly. It may function as molecular chaperone directly or indirectly in the correct assembly of PapA subunits. The chain is Protein PapJ (papJ) from Escherichia coli.